Reading from the N-terminus, the 228-residue chain is Large ribosomal subunit protein mL64 (228 aa).

2 disordered regions span residues 20 to 44 (PRSR…DREN) and 186 to 228 (QRKR…KPSS). Residues 98–207 (TMQESLRVQQ…KKEARIAAMA (110 aa)) adopt a coiled-coil conformation. Positions 184 to 200 (KQQRKRLKEERQRQKKE) match the Nuclear localization signal motif. The span at 186–202 (QRKRLKEERQRQKKEAR) shows a compositional bias: basic and acidic residues. Positions 212 to 228 (QDSAEAQDSAASGKPSS) are enriched in low complexity.

Belongs to the mitochondrion-specific ribosomal protein mL64 family. In terms of assembly, component of the mitochondrial ribosome large subunit (39S) which comprises a 16S rRNA and about 50 distinct proteins. Interacts with GADD45A, GADD45B and GADD45G. Interacts with NR4A1 via the NR4A1 AB domain. Interacts with ATAD3A and ATAD3B.

It localises to the mitochondrion. It is found in the nucleus. Acts as a negative regulator of G1 to S cell cycle phase progression by inhibiting cyclin-dependent kinases. Inhibitory effects are additive with GADD45 proteins but also occur in the absence of GADD45 proteins. Acts as a repressor of the orphan nuclear receptor NR4A1 by inhibiting AB domain-mediated transcriptional activity. May be involved in the hormone-mediated regulation of NR4A1 transcriptional activity. May play a role in mitochondrial protein synthesis. The protein is Large ribosomal subunit protein mL64 (Gadd45gip1) of Rattus norvegicus (Rat).